Reading from the N-terminus, the 419-residue chain is 20-hydroxy-prefusarin hydrolase FUS2 (419 aa).

The active site involves Ser-238.

It belongs to the AB hydrolase superfamily. FUS2 hydrolase family.

It functions in the pathway mycotoxin biosynthesis. In terms of biological role, 20-hydroxy-prefusarin hydrolase; part of the gene cluster that mediates the biosynthesis of the mycotoxin fusarin C. Within the cluster, FUS1, FUS2, FUS8 and FUS9 are sufficient for fusarin production. The roles of the other FUS members are yet undetermined. The fusarin C synthetase FUS1 is responsible for the condensation of one acetyl-coenzyme A (CoA) unit with six malonyl-CoA units and the amide linkage of the arising heptaketide and homoserine, subsequently releasing the first intermediate, prefusarin, as an alcohol with an open ring structure. The cytochrome P450 monooxygenase FUS8 participates in multiple oxidation processes at carbon C-20 and is able to use the FUS1 product as substrate, resulting in formation of 20-hydroxy-prefusarin. This reaction seems to be essential before the 2-pyrrolidone ring closure can be catalyzed by FUS2, generating 20-hydroxy-fusarin. FUS8 is able to further oxidizes carbon C-20 after ring closure, resulting in the formation of carboxy-fusarin C. As the last step, FUS9 methylates the hydroxyl group at C-21 to generate fusarin C. Fusarin C can then rearrange to epi-fusarin C, the (z)-isomers, and fusarin A and fusarin D. The polypeptide is 20-hydroxy-prefusarin hydrolase FUS2 (Gibberella moniliformis (strain M3125 / FGSC 7600) (Maize ear and stalk rot fungus)).